The sequence spans 368 residues: tRNA-specific 2-thiouridylase MnmA (368 aa).

ATP is bound by residues 11-18 (GMSGGVDS) and methionine 37. Residues 97–99 (NPD) form an interaction with target base in tRNA region. The active-site Nucleophile is the cysteine 102. An intrachain disulfide couples cysteine 102 to cysteine 199. Glycine 127 provides a ligand contact to ATP. The interaction with tRNA stretch occupies residues 149-151 (KDQ). Residue cysteine 199 is the Cysteine persulfide intermediate of the active site. Positions 311–312 (RY) are interaction with tRNA.

The protein belongs to the MnmA/TRMU family. In terms of assembly, interacts with TusE.

Its subcellular location is the cytoplasm. The enzyme catalyses S-sulfanyl-L-cysteinyl-[protein] + uridine(34) in tRNA + AH2 + ATP = 2-thiouridine(34) in tRNA + L-cysteinyl-[protein] + A + AMP + diphosphate + H(+). Catalyzes the 2-thiolation of uridine at the wobble position (U34) of tRNA(Lys), tRNA(Glu) and tRNA(Gln), leading to the formation of s(2)U34, the first step of tRNA-mnm(5)s(2)U34 synthesis. Sulfur is provided by IscS, via a sulfur-relay system. Binds ATP and its substrate tRNAs. The chain is tRNA-specific 2-thiouridylase MnmA from Salmonella typhimurium (strain LT2 / SGSC1412 / ATCC 700720).